The chain runs to 141 residues: Small ribosomal subunit protein uS8 (141 aa).

The protein belongs to the universal ribosomal protein uS8 family. Part of the 30S ribosomal subunit. Contacts proteins S5 and S12.

In terms of biological role, one of the primary rRNA binding proteins, it binds directly to 16S rRNA central domain where it helps coordinate assembly of the platform of the 30S subunit. The protein is Small ribosomal subunit protein uS8 of Mycoplasma genitalium (strain ATCC 33530 / DSM 19775 / NCTC 10195 / G37) (Mycoplasmoides genitalium).